A 491-amino-acid polypeptide reads, in one-letter code: GTPase Der (491 aa).

2 EngA-type G domains span residues 3 to 166 (PVVA…AEAM) and 200 to 373 (IKLA…DSAT). GTP contacts are provided by residues 9-16 (GRPNVGKS), 56-60 (DTGGI), 118-121 (NKVD), 206-213 (GKPNVGKS), 253-257 (DTAGV), and 318-321 (NKWD). A KH-like domain is found at 374 to 458 (RRVSTSMLTR…PIQIRFQEGD (85 aa)). The disordered stretch occupies residues 472 to 491 (QERRRKRALSHINDRKTKGE).

This sequence belongs to the TRAFAC class TrmE-Era-EngA-EngB-Septin-like GTPase superfamily. EngA (Der) GTPase family. Associates with the 50S ribosomal subunit.

In terms of biological role, GTPase that plays an essential role in the late steps of ribosome biogenesis. This Shewanella denitrificans (strain OS217 / ATCC BAA-1090 / DSM 15013) protein is GTPase Der.